Consider the following 357-residue polypeptide: DNA replication and repair protein RecF (357 aa).

An ATP-binding site is contributed by 30-37 (GANGSGKT).

This sequence belongs to the RecF family.

The protein localises to the cytoplasm. Functionally, the RecF protein is involved in DNA metabolism; it is required for DNA replication and normal SOS inducibility. RecF binds preferentially to single-stranded, linear DNA. It also seems to bind ATP. This is DNA replication and repair protein RecF from Citrobacter koseri (strain ATCC BAA-895 / CDC 4225-83 / SGSC4696).